We begin with the raw amino-acid sequence, 72 residues long: MSQNNLKFTEFLSNVKSKANSKGFMKLFDMYHRQVVVKKPFSFLVHIMCGLTLTSYVIRHDKVEHHKTQPYH.

Residues 41–58 form a helical membrane-spanning segment; it reads FSFLVHIMCGLTLTSYVI.

It is found in the membrane. This is an uncharacterized protein from Dictyostelium discoideum (Social amoeba).